Reading from the N-terminus, the 182-residue chain is Probable RNA 2'-phosphotransferase (182 aa).

It belongs to the KptA/TPT1 family.

Functionally, removes the 2'-phosphate from RNA via an intermediate in which the phosphate is ADP-ribosylated by NAD followed by a presumed transesterification to release the RNA and generate ADP-ribose 1''-2''-cyclic phosphate (APPR&gt;P). May function as an ADP-ribosylase. The polypeptide is Probable RNA 2'-phosphotransferase (Pseudomonas fluorescens (strain ATCC BAA-477 / NRRL B-23932 / Pf-5)).